Reading from the N-terminus, the 772-residue chain is Acylamino-acid-releasing enzyme 2 (772 aa).

Active-site charge relay system residues include Ser-617, Asp-708, and His-740.

Belongs to the peptidase S9C family. In terms of assembly, homotetramer.

Its subcellular location is the cytoplasm. The enzyme catalyses Cleavage of an N-acetyl or N-formyl amino acid from the N-terminus of a polypeptide.. Functionally, catalyzes the hydrolysis of the N-terminal peptide bond of an N-acetylated peptide to generate an N-acetylated amino acid and a peptide with a free N-terminus. The sequence is that of Acylamino-acid-releasing enzyme 2 from Oryza sativa subsp. japonica (Rice).